An 860-amino-acid polypeptide reads, in one-letter code: Leucine--tRNA ligase (860 aa).

The short motif at 42-52 (PYPSGRLHMGH) is the 'HIGH' region element. The 'KMSKS' region signature appears at 619-623 (KMSKS). Lys-622 contributes to the ATP binding site.

It belongs to the class-I aminoacyl-tRNA synthetase family.

Its subcellular location is the cytoplasm. The catalysed reaction is tRNA(Leu) + L-leucine + ATP = L-leucyl-tRNA(Leu) + AMP + diphosphate. This Pasteurella multocida (strain Pm70) protein is Leucine--tRNA ligase.